Reading from the N-terminus, the 359-residue chain is Phosphate acyltransferase (359 aa).

The protein belongs to the PlsX family. As to quaternary structure, homodimer. Probably interacts with PlsY.

The protein resides in the cytoplasm. The enzyme catalyses a fatty acyl-[ACP] + phosphate = an acyl phosphate + holo-[ACP]. It functions in the pathway lipid metabolism; phospholipid metabolism. Catalyzes the reversible formation of acyl-phosphate (acyl-PO(4)) from acyl-[acyl-carrier-protein] (acyl-ACP). This enzyme utilizes acyl-ACP as fatty acyl donor, but not acyl-CoA. In Koribacter versatilis (strain Ellin345), this protein is Phosphate acyltransferase.